The primary structure comprises 1088 residues: RNA-directed RNA polymerase (1088 aa).

The RdRp catalytic domain occupies 501–687; that stretch reads LSYGDVTRFL…AKRYIAGGKI (187 aa).

The protein belongs to the reoviridae RNA-directed RNA polymerase family. Interacts with VP3 (Potential). Interacts with VP2; this interaction activates VP1. Interacts with NSP5; this interaction is probably necessary for the formation of functional virus factories. Interacts with NSP2; this interaction is weak. The cofactor is Mg(2+).

It is found in the virion. It carries out the reaction RNA(n) + a ribonucleoside 5'-triphosphate = RNA(n+1) + diphosphate. In terms of biological role, RNA-directed RNA polymerase that is involved in both transcription and genome replication. Together with VP3 capping enzyme, forms an enzyme complex positioned near the channels situated at each of the five-fold vertices of the core. Following infection, the outermost layer of the virus is lost, leaving a double-layered particle (DLP) made up of the core and VP6 shell. VP1 then catalyzes the transcription of fully conservative plus-strand genomic RNAs that are extruded through the DLP's channels into the cytoplasm where they function as mRNAs for translation of viral proteins. One copy of each of the viral (+)RNAs is also recruited during core assembly, together with newly synthesized polymerase complexes and VP2. The polymerase of these novo-formed particles catalyzes the synthesis of complementary minus-strands leading to dsRNA formation. To do so, the polymerase specifically recognizes and binds 4 bases 5'-UGUG-3' in the conserved 3'-sequence of plus-strand RNA templates. VP2 presumably activates the autoinhibited VP1-RNA complex to coordinate packaging and genome replication. Once dsRNA synthesis is complete, the polymerase switches to the transcriptional mode, thus providing secondary transcription. In Rotavirus A (strain RVA/Human/United States/Wa/1974/G1P1A[8]) (RV-A), this protein is RNA-directed RNA polymerase.